A 157-amino-acid chain; its full sequence is 2-C-methyl-D-erythritol 2,4-cyclodiphosphate synthase (157 aa).

A divalent metal cation is bound by residues Asp-8 and His-10. 4-CDP-2-C-methyl-D-erythritol 2-phosphate contacts are provided by residues 8–10 and 34–35; these read DVH and HS. His-42 provides a ligand contact to a divalent metal cation. Residues 56–58, 132–135, Phe-139, and Arg-142 each bind 4-CDP-2-C-methyl-D-erythritol 2-phosphate; these read DIG and TTNE.

This sequence belongs to the IspF family. Homotrimer. It depends on a divalent metal cation as a cofactor.

The catalysed reaction is 4-CDP-2-C-methyl-D-erythritol 2-phosphate = 2-C-methyl-D-erythritol 2,4-cyclic diphosphate + CMP. It participates in isoprenoid biosynthesis; isopentenyl diphosphate biosynthesis via DXP pathway; isopentenyl diphosphate from 1-deoxy-D-xylulose 5-phosphate: step 4/6. Its function is as follows. Involved in the biosynthesis of isopentenyl diphosphate (IPP) and dimethylallyl diphosphate (DMAPP), two major building blocks of isoprenoid compounds. Catalyzes the conversion of 4-diphosphocytidyl-2-C-methyl-D-erythritol 2-phosphate (CDP-ME2P) to 2-C-methyl-D-erythritol 2,4-cyclodiphosphate (ME-CPP) with a corresponding release of cytidine 5-monophosphate (CMP). The sequence is that of 2-C-methyl-D-erythritol 2,4-cyclodiphosphate synthase from Symbiobacterium thermophilum (strain DSM 24528 / JCM 14929 / IAM 14863 / T).